The primary structure comprises 436 residues: Putative ankyrin repeat protein FPV245 (436 aa).

10 ANK repeats span residues 1–30, 34–63, 67–96, 98–119, 123–152, 156–185, 189–218, 222–252, 253–283, and 287–317; these read MSVDWRTEIYSGDISLVEKLIKNKGNCINI, ETTTPLIDAIRTGNAKIVELFIKHGAQVNH, KIPNPLLTAIKIGSHDIVKLLLINGVDTSI, PVPCINKEMIKTILDSGVKVNT, KSKTFLHYAIKNNDLEVIKMLFEYGADVNI, NGCYPIHIATRSNSYEIIKLLLEKGAYANV, YGNSPLHNAAKYGDYACIKLVLDHTNNISN, NGVTPLHNAILYNRSAVELLINNRSINDTDV, DGYTPLHYALQPPCSIDIIDILLYNNADISI, and NGRNPIDTAFKYINRDSVIKELLANAVLINE.

The chain is Putative ankyrin repeat protein FPV245 from Vertebrata (FPV).